A 354-amino-acid polypeptide reads, in one-letter code: MSKIRVLIVDDSALMRKYLREILEQDPEIEVIAVARNGREAVEKALELSPDVITMDINMPEMDGLTAIQYIMLHRPTPIIVISSLTQKGALTTFEALELGAVDYVAKPDGTVSLKIKEVAEEILQKVKAVAKSRGVVRLKARKERPFVQEVPKTRPVSPDTSFKKLILIGVSTGGPKALMEIIPRLPGNLDASVVIIQHMPEKFTASFAARLNNYSELYVKEAEDGESLERGKVLVARGGINLKLERKLGINVVRVRYTPLPRETIYWPSVDVAFRSALTVIEPHRIIAVLLTGMGDDGAQAMVEIKQKGGYTIAESEETAVVWGMPREAIERGGASEILPVYQIADRIVELVR.

Residues 5–122 (RVLIVDDSAL…SLKIKEVAEE (118 aa)) form the Response regulatory domain. Aspartate 56 is modified (4-aspartylphosphate). The CheB-type methylesterase domain occupies 159–354 (PDTSFKKLIL…IADRIVELVR (196 aa)). Catalysis depends on residues serine 172, histidine 199, and aspartate 298.

It belongs to the CheB family. Phosphorylated by CheA. Phosphorylation of the N-terminal regulatory domain activates the methylesterase activity.

It localises to the cytoplasm. It carries out the reaction [protein]-L-glutamate 5-O-methyl ester + H2O = L-glutamyl-[protein] + methanol + H(+). The enzyme catalyses L-glutaminyl-[protein] + H2O = L-glutamyl-[protein] + NH4(+). Its function is as follows. Involved in chemotaxis. Part of a chemotaxis signal transduction system that modulates chemotaxis in response to various stimuli. Catalyzes the demethylation of specific methylglutamate residues introduced into the chemoreceptors (methyl-accepting chemotaxis proteins or MCP) by CheR. Also mediates the irreversible deamidation of specific glutamine residues to glutamic acid. The chain is Protein-glutamate methylesterase/protein-glutamine glutaminase 2 from Carboxydothermus hydrogenoformans (strain ATCC BAA-161 / DSM 6008 / Z-2901).